Here is a 227-residue protein sequence, read N- to C-terminus: Cytochrome c oxidase subunit 2 (227 aa).

The Mitochondrial intermembrane portion of the chain corresponds to M1–S14. A helical transmembrane segment spans residues P15–M45. Topologically, residues L46–Q59 are mitochondrial matrix. The chain crosses the membrane as a helical span at residues E60–M87. Residues D88 to I227 are Mitochondrial intermembrane-facing. Cu cation-binding residues include H161, C196, E198, C200, H204, and M207. E198 contacts Mg(2+).

It belongs to the cytochrome c oxidase subunit 2 family. As to quaternary structure, component of the cytochrome c oxidase (complex IV, CIV), a multisubunit enzyme composed of 14 subunits. The complex is composed of a catalytic core of 3 subunits MT-CO1, MT-CO2 and MT-CO3, encoded in the mitochondrial DNA, and 11 supernumerary subunits COX4I, COX5A, COX5B, COX6A, COX6B, COX6C, COX7A, COX7B, COX7C, COX8 and NDUFA4, which are encoded in the nuclear genome. The complex exists as a monomer or a dimer and forms supercomplexes (SCs) in the inner mitochondrial membrane with NADH-ubiquinone oxidoreductase (complex I, CI) and ubiquinol-cytochrome c oxidoreductase (cytochrome b-c1 complex, complex III, CIII), resulting in different assemblies (supercomplex SCI(1)III(2)IV(1) and megacomplex MCI(2)III(2)IV(2)). Found in a complex with TMEM177, COA6, COX18, COX20, SCO1 and SCO2. Interacts with TMEM177 in a COX20-dependent manner. Interacts with COX20. Interacts with COX16. Cu cation is required as a cofactor.

Its subcellular location is the mitochondrion inner membrane. It catalyses the reaction 4 Fe(II)-[cytochrome c] + O2 + 8 H(+)(in) = 4 Fe(III)-[cytochrome c] + 2 H2O + 4 H(+)(out). Functionally, component of the cytochrome c oxidase, the last enzyme in the mitochondrial electron transport chain which drives oxidative phosphorylation. The respiratory chain contains 3 multisubunit complexes succinate dehydrogenase (complex II, CII), ubiquinol-cytochrome c oxidoreductase (cytochrome b-c1 complex, complex III, CIII) and cytochrome c oxidase (complex IV, CIV), that cooperate to transfer electrons derived from NADH and succinate to molecular oxygen, creating an electrochemical gradient over the inner membrane that drives transmembrane transport and the ATP synthase. Cytochrome c oxidase is the component of the respiratory chain that catalyzes the reduction of oxygen to water. Electrons originating from reduced cytochrome c in the intermembrane space (IMS) are transferred via the dinuclear copper A center (CU(A)) of subunit 2 and heme A of subunit 1 to the active site in subunit 1, a binuclear center (BNC) formed by heme A3 and copper B (CU(B)). The BNC reduces molecular oxygen to 2 water molecules using 4 electrons from cytochrome c in the IMS and 4 protons from the mitochondrial matrix. This Apodemus semotus (Taiwan field mouse) protein is Cytochrome c oxidase subunit 2 (MT-CO2).